A 371-amino-acid polypeptide reads, in one-letter code: S-adenosylmethionine:tRNA ribosyltransferase-isomerase (371 aa).

It belongs to the QueA family. In terms of assembly, monomer.

Its subcellular location is the cytoplasm. The catalysed reaction is 7-aminomethyl-7-carbaguanosine(34) in tRNA + S-adenosyl-L-methionine = epoxyqueuosine(34) in tRNA + adenine + L-methionine + 2 H(+). Its pathway is tRNA modification; tRNA-queuosine biosynthesis. Functionally, transfers and isomerizes the ribose moiety from AdoMet to the 7-aminomethyl group of 7-deazaguanine (preQ1-tRNA) to give epoxyqueuosine (oQ-tRNA). The chain is S-adenosylmethionine:tRNA ribosyltransferase-isomerase from Rickettsia akari (strain Hartford).